The primary structure comprises 352 residues: Selenide, water dikinase (352 aa).

Cys-23 is an active-site residue. Residues Lys-26 and 54–56 (SRD) contribute to the ATP site. Asp-57 is a binding site for Mg(2+). Residues Asp-74, Asp-97, and 145–147 (GHS) each bind ATP. Residue Asp-97 participates in Mg(2+) binding. Asp-233 serves as a coordination point for Mg(2+).

Belongs to the selenophosphate synthase 1 family. Class I subfamily. Homodimer. It depends on Mg(2+) as a cofactor.

It catalyses the reaction hydrogenselenide + ATP + H2O = selenophosphate + AMP + phosphate + 2 H(+). In terms of biological role, synthesizes selenophosphate from selenide and ATP. The chain is Selenide, water dikinase from Shewanella baltica (strain OS185).